The primary structure comprises 620 residues: Protein phosphatase 2C-like domain-containing protein 1 (620 aa).

The PPM-type phosphatase domain maps to 173-611; the sequence is GIAICSNNNS…DSITVMVMFL (439 aa).

Belongs to the PP2C family.

This chain is Protein phosphatase 2C-like domain-containing protein 1 (Pp2d1), found in Mus musculus (Mouse).